The primary structure comprises 305 residues: Tetraspanin-12 (305 aa).

The Cytoplasmic portion of the chain corresponds to 1 to 12; sequence MAREDSVKCLRC. 2 S-palmitoyl cysteine lipidation sites follow: Cys-9 and Cys-12. A helical transmembrane segment spans residues 13–33; that stretch reads LLYALNLLFWLMSISVLAVSA. Residues 34 to 59 are Extracellular-facing; that stretch reads WMRDYLNNVLTLTAETRVEEAVILTY. A helical transmembrane segment spans residues 60–80; it reads FPVVHPVMIAVCCFLIIVGML. Residue Cys-83 is the site of S-palmitoyl cysteine attachment. A helical membrane pass occupies residues 90–110; the sequence is LLLLAWYFGTLLVIFCVELAC. The Extracellular portion of the chain corresponds to 111 to 224; that stretch reads GVWTYEQEVM…RGTKQLQVLR (114 aa). The helical transmembrane segment at 225–245 threads the bilayer; that stretch reads FLGISIGVTQILAMILTITLL. At 246–305 the chain is on the cytoplasmic side; sequence WALYYDRREPGTDQMLSLKNDASQHLSCHSVELLKPSLSRIFEHTSMANSFNTHFEMEEL.

This sequence belongs to the tetraspanin (TM4SF) family. As to quaternary structure, component of a complex, at least composed of TSPAN12, FZD4 and norrin (NDP). Interacts (when palmitoylated) with ADAM10. Interacts with MMP14/MT1-MMP. In terms of processing, palmitoylated; required for interaction with ADAM10. The precise position of palmitoylated residues is unclear and occurs either on Cys-9, Cys-12 and/or Cys-83.

Its subcellular location is the cell membrane. Functionally, regulator of cell surface receptor signal transduction. Plays a central role in retinal vascularization by regulating norrin (NDP) signal transduction. Acts in concert with norrin (NDP) to promote FZD4 multimerization and subsequent activation of FZD4, leading to promote accumulation of beta-catenin (CTNNB1) and stimulate LEF/TCF-mediated transcriptional programs. Suprisingly, it only activates the norrin (NDP)-dependent activation of FZD4, while it does not activate the Wnt-dependent activation of FZD4, suggesting the existence of a Wnt-independent signaling that also promote accumulation the beta-catenin (CTNNB1). Acts as a regulator of membrane proteinases such as ADAM10 and MMP14/MT1-MMP. Activates ADAM10-dependent cleavage activity of amyloid precursor protein (APP). Activates MMP14/MT1-MMP-dependent cleavage activity. The chain is Tetraspanin-12 (Tspan12) from Rattus norvegicus (Rat).